Here is a 273-residue protein sequence, read N- to C-terminus: Ribosomal RNA small subunit methyltransferase A (273 aa).

S-adenosyl-L-methionine contacts are provided by N17, L19, G44, E65, and N111.

Belongs to the class I-like SAM-binding methyltransferase superfamily. rRNA adenine N(6)-methyltransferase family. RsmA subfamily.

It is found in the cytoplasm. It catalyses the reaction adenosine(1518)/adenosine(1519) in 16S rRNA + 4 S-adenosyl-L-methionine = N(6)-dimethyladenosine(1518)/N(6)-dimethyladenosine(1519) in 16S rRNA + 4 S-adenosyl-L-homocysteine + 4 H(+). In terms of biological role, specifically dimethylates two adjacent adenosines (A1518 and A1519) in the loop of a conserved hairpin near the 3'-end of 16S rRNA in the 30S particle. May play a critical role in biogenesis of 30S subunits. The chain is Ribosomal RNA small subunit methyltransferase A from Buchnera aphidicola subsp. Acyrthosiphon pisum (strain APS) (Acyrthosiphon pisum symbiotic bacterium).